Here is a 521-residue protein sequence, read N- to C-terminus: Vang-like protein 2-A (521 aa).

A disordered region spans residues 1–81; sequence MDNDSQYSGY…TTVVTGTSEH (81 aa). Topologically, residues 1–108 are cytoplasmic; it reads MDNDSQYSGY…AKLDCSRHLG (108 aa). A compositionally biased stretch (basic residues) spans 15–33; that stretch reads GHSRSSRKHRDRRERHRSK. A compositionally biased stretch (basic and acidic residues) spans 57–67; that stretch reads ESTRGEDRDDN. Residues 69-81 are compositionally biased toward low complexity; it reads GETTTVVTGTSEH. The chain crosses the membrane as a helical span at residues 109-129; the sequence is VVIGGALALLSFLTPIAFMLL. Topologically, residues 130–147 are extracellular; the sequence is PQILWREDLEQCGTACEG. Residues 148 to 168 form a helical membrane-spanning segment; the sequence is LFISVAFKLLILLLGSWALFF. Topologically, residues 169–178 are cytoplasmic; that stretch reads RRPKAFFPRV. The helical transmembrane segment at 179–199 threads the bilayer; sequence FVFRALLMVLVFLLVVSYWLF. Over 200-218 the chain is Extracellular; the sequence is YGVRILESRDKNYQGIVQY. A helical membrane pass occupies residues 219 to 239; sequence AVSLVDALLFVHYLAVVLLEL. Residues 240-521 are Cytoplasmic-facing; it reads RQLQPQFTIK…VMRLQSETSV (282 aa). The PDZ-binding signature appears at 518 to 521; it reads ETSV.

This sequence belongs to the Vang family. As to quaternary structure, interacts with dvl/dsh. Interacts with prickle3. As to expression, during gastrulation, broadly expressed throughout the marginal zone and animal cap region. From the neurula stages, expression becomes concentrated in neural tissues, in the neural plate and neural tube.

The protein localises to the cell membrane. Functionally, has a role in non-canonical Wnt/planar cell polarity (PCP) signaling; can recruit dvl/dsh and prickle from the cytoplasm to the plasma membrane. Acts in a PCP complex to regulate the polarized assembly of fibronectrin on the surface of the mesoderm during gastrulation. Regulates convergent extension cell movements in both dorsal mesoderm and neural tissue during gastrulation, without affecting cell fate. Regulates neural fold closure during neurulation. May be required for cell surface localization of fzd3 and fzd6 in the inner ear. This Xenopus laevis (African clawed frog) protein is Vang-like protein 2-A (vangl2-a).